An 892-amino-acid chain; its full sequence is Microsomal triglyceride transfer protein homolog (892 aa).

The first 19 residues, 1-19 (MFSSRIWLLLAVTVGVCLA), serve as a signal peptide directing secretion.

As to quaternary structure, heterodimer; heterodimerizes with protein disulfide isomerase.

It localises to the endoplasmic reticulum. Its function is as follows. Catalyzes the transport of cholesteryl ester, and phospholipid between phospholipid surfaces. Does not catalyze transport of triglycerides. Required for the assembly and secretion of plasma lipoproteins that contain apolipoprotein B. Required for normal expression of klf-3. This Caenorhabditis elegans protein is Microsomal triglyceride transfer protein homolog.